The sequence spans 858 residues: Taste receptor type 1 member 3 (858 aa).

The first 20 residues, 1–20 (MPGLAILGLSLAAFLELGMG), serve as a signal peptide directing secretion. The Extracellular portion of the chain corresponds to 21-575 (SSLCLSQQFK…FLAWGEPAVL (555 aa)). 9 N-linked (GlcNAc...) asparagine glycosylation sites follow: Asn-85, Asn-130, Asn-203, Asn-264, Asn-379, Asn-387, Asn-418, Asn-439, and Asn-482. Residues 576-596 (SLLLLLCLVLGLTLAALGLFV) traverse the membrane as a helical segment. The Cytoplasmic segment spans residues 597 to 610 (HYWDSPLVQASGGS). The helical transmembrane segment at 611–631 (LFCFGLICLGLFCLSVLLFPG) threads the bilayer. The Extracellular segment spans residues 632-644 (RPRSASCLAQQPM). Residues 645 to 665 (AHLPLTGCLSTLFLQAAEIFV) form a helical membrane-spanning segment. The Cytoplasmic portion of the chain corresponds to 666–687 (ESELPLSWANWLCSYLRGPWAW). Residues 688-708 (LVVLLATLVEAALCAWYLMAF) form a helical membrane-spanning segment. Over 709–735 (PPEVVTDWQVLPTEVLEHCRMRSWVSL) the chain is Extracellular. A helical membrane pass occupies residues 736–756 (GLVHITNAVLAFLCFLGTFLV). Topologically, residues 757 to 767 (QSQPGRYNRAR) are cytoplasmic. The chain crosses the membrane as a helical span at residues 768–788 (GLTFAMLAYFIIWVSFVPLLA). Residues 789 to 796 (NVQVAYQP) are Extracellular-facing. The chain crosses the membrane as a helical span at residues 797-817 (AVQMGAILFCALGILATFHLP). At 818 to 858 (KCYVLLWLPELNTQEFFLGRSPKEASDGNSGSSEATRGHSE) the chain is on the cytoplasmic side. Positions 839–858 (PKEASDGNSGSSEATRGHSE) are disordered.

Belongs to the G-protein coupled receptor 3 family. TAS1R subfamily. Forms homodimers or heterodimers with TAS1R1 and TAS1R2.

It is found in the cell membrane. Putative taste receptor. TAS1R1/TAS1R3 responds to the umami taste stimulus (the taste of monosodium glutamate) and also to most of the 20 standard L-amino acids, but not to their D-enantiomers or other compounds. TAS1R2/TAS1R3 recognizes diverse natural and synthetic sweeteners. TAS1R3 is essential for the recognition and response to the disaccharide trehalose. Sequence differences within and between species can significantly influence the selectivity and specificity of taste responses. The protein is Taste receptor type 1 member 3 (Tas1r3) of Rattus norvegicus (Rat).